We begin with the raw amino-acid sequence, 177 residues long: MSRVAKAPVAIPAGVEVKLNGQEITIKGAKGELTRVFHNGVVIAQEDNQLTFGPREGVANAWAQAGTARALVKNMVVGVTEGFTKKLVLKGVGYRAAMKGNAVGLTLGFSHPVEHELPAGVKAECPSQTEIVLTGCDKQVVGQVAADIRSYRAPEPYKGKGIRYADENVRSKEAKKK.

It belongs to the universal ribosomal protein uL6 family. In terms of assembly, part of the 50S ribosomal subunit.

In terms of biological role, this protein binds to the 23S rRNA, and is important in its secondary structure. It is located near the subunit interface in the base of the L7/L12 stalk, and near the tRNA binding site of the peptidyltransferase center. This chain is Large ribosomal subunit protein uL6, found in Vibrio cholerae serotype O1 (strain ATCC 39315 / El Tor Inaba N16961).